The sequence spans 69 residues: Protein transport protein Sec61 subunit gamma (69 aa).

The Cytoplasmic segment spans residues 1–32; that stretch reads MDAVDSVVDPLREFAKDSVRLVKRCHKPDRKE. Residues 33-61 traverse the membrane as a helical segment; that stretch reads FTKVAARTAIGFVVMGFVGFFVKLIFIPI. Residues 62–69 are Extracellular-facing; that stretch reads NNIIVGSG.

Belongs to the SecE/SEC61-gamma family. Heterotrimeric complex composed of SEC61-alpha, SEC61-beta and SEC61-gamma.

It localises to the endoplasmic reticulum membrane. Necessary for protein translocation in the endoplasmic reticulum. This Oryza sativa subsp. japonica (Rice) protein is Protein transport protein Sec61 subunit gamma.